The chain runs to 40 residues: Photosystem II reaction center protein J (40 aa).

A helical transmembrane segment spans residues 8-28 (IPLWLIGTVTGILVIGLIGVF).

It belongs to the PsbJ family. In terms of assembly, PSII is composed of 1 copy each of membrane proteins PsbA, PsbB, PsbC, PsbD, PsbE, PsbF, PsbH, PsbI, PsbJ, PsbK, PsbL, PsbM, PsbT, PsbX, PsbY, PsbZ, Psb30/Ycf12, at least 3 peripheral proteins of the oxygen-evolving complex and a large number of cofactors. It forms dimeric complexes.

It is found in the plastid. Its subcellular location is the chloroplast thylakoid membrane. Its function is as follows. One of the components of the core complex of photosystem II (PSII). PSII is a light-driven water:plastoquinone oxidoreductase that uses light energy to abstract electrons from H(2)O, generating O(2) and a proton gradient subsequently used for ATP formation. It consists of a core antenna complex that captures photons, and an electron transfer chain that converts photonic excitation into a charge separation. The chain is Photosystem II reaction center protein J from Nymphaea alba (White water-lily).